We begin with the raw amino-acid sequence, 171 residues long: MTNFTFDGAHSSLEFQIKHLMVSKVKGSFDQFDVAVEGDINDFSTLKATATIIPSSINTKNEARDNHLKSGDFFGTDEFDKITFVTKSVSESKVVGDLTIKGITNEETFDVEFNGVSKNPMDGSQVTGVIVTGTINRENYGINFNQALETGGVMLGKDVKFEASAEFSISE.

It belongs to the UPF0312 family.

The protein is UPF0312 protein MW2606 of Staphylococcus aureus (strain MW2).